A 245-amino-acid polypeptide reads, in one-letter code: MNILAVIPARYQSQRFPGKPLVMLDERPMVQWVYEAAKSCDFFQDAVVATDSDKIADCVKGFGGKVVMTRDDHLTGTDRVAEVAGFYDDMDVVVNVQGDQPFVTPEALEQLVRPYREGERPEMTTLGCPLDMDEDYASPNAVKVLCDRNGHALYFSRSPIPYFRTQGTVPVYHHLGLYAFRHDFLMQYSQLEPTPFETCEGLEQLRVLEYGYAIKVCQTQKAAIEINTPEDLVKAQLFIQQGMTS.

It belongs to the KdsB family.

The protein localises to the cytoplasm. It catalyses the reaction 3-deoxy-alpha-D-manno-oct-2-ulosonate + CTP = CMP-3-deoxy-beta-D-manno-octulosonate + diphosphate. It functions in the pathway nucleotide-sugar biosynthesis; CMP-3-deoxy-D-manno-octulosonate biosynthesis; CMP-3-deoxy-D-manno-octulosonate from 3-deoxy-D-manno-octulosonate and CTP: step 1/1. The protein operates within bacterial outer membrane biogenesis; lipopolysaccharide biosynthesis. Its function is as follows. Activates KDO (a required 8-carbon sugar) for incorporation into bacterial lipopolysaccharide in Gram-negative bacteria. This is 3-deoxy-manno-octulosonate cytidylyltransferase from Acaryochloris marina (strain MBIC 11017).